The primary structure comprises 369 residues: 3 beta-hydroxysteroid dehydrogenase type 7 (369 aa).

Tyr-159 acts as the Proton acceptor in catalysis. Lys-163 is an NAD(+) binding site. 2 helical membrane passes run 289–309 and 311–331; these read LLPY…QWLL and PLVL…NTTF.

This sequence belongs to the 3-beta-HSD family.

It localises to the endoplasmic reticulum membrane. It catalyses the reaction 7alpha-hydroxycholesterol + NAD(+) = 7alpha-hydroxycholest-4-en-3-one + NADH + H(+). It carries out the reaction 7alpha,25-dihydroxycholesterol + NAD(+) = 7alpha,25-dihydroxy-4-cholesten-3-one + NADH + H(+). The catalysed reaction is (25R)-cholest-5-en-3beta,7alpha,26-triol + NAD(+) = (25R)-7alpha,26-dihydroxycholest-4-en-3-one + NADH + H(+). The enzyme catalyses (24S)-7alpha-dihydroxycholesterol + NAD(+) = (24S)-7alpha,24-dihydroxycholest-4-en-3-one + NADH + H(+). It participates in lipid metabolism; steroid biosynthesis. In terms of biological role, the 3-beta-HSD enzymatic system plays a crucial role in the biosynthesis of all classes of hormonal steroids. HSD VII is active against four 7-alpha-hydroxylated sterols. Does not metabolize several different C(19/21) steroids as substrates. Involved in bile acid synthesis. Plays a key role in cell positioning and movement in lymphoid tissues by mediating degradation of 7-alpha,25-dihydroxycholesterol (7-alpha,25-OHC): 7-alpha,25-OHC acts as a ligand for the G protein-coupled receptor GPR183/EBI2, a chemotactic receptor for a number of lymphoid cells. In Homo sapiens (Human), this protein is 3 beta-hydroxysteroid dehydrogenase type 7.